The following is a 105-amino-acid chain: Ferredoxin-2 (105 aa).

The 91-residue stretch at 4 to 94 (YQVEVIYQGQ…DLKIETHKED (91 aa)) folds into the 2Fe-2S ferredoxin-type domain. Residues Cys40, Cys45, Cys48, and Cys78 each contribute to the [2Fe-2S] cluster site.

This sequence belongs to the 2Fe2S plant-type ferredoxin family. Forms a complex with heterodimeric ferredoxin-thioredoxin reductase (FTR) and thioredoxin. Requires [2Fe-2S] cluster as cofactor.

Functionally, ferredoxins are iron-sulfur proteins that transfer electrons in a wide variety of metabolic reactions. In Synechococcus sp. (strain ATCC 27144 / PCC 6301 / SAUG 1402/1) (Anacystis nidulans), this protein is Ferredoxin-2 (petF2).